The chain runs to 396 residues: Ribosomal RNA large subunit methyltransferase I (396 aa).

One can recognise a PUA domain in the interval 2 to 81 (SVRLVLTKGR…ETIDIAFFTR (80 aa)).

The protein belongs to the methyltransferase superfamily. RlmI family.

The protein localises to the cytoplasm. It catalyses the reaction cytidine(1962) in 23S rRNA + S-adenosyl-L-methionine = 5-methylcytidine(1962) in 23S rRNA + S-adenosyl-L-homocysteine + H(+). Specifically methylates the cytosine at position 1962 (m5C1962) of 23S rRNA. The protein is Ribosomal RNA large subunit methyltransferase I of Enterobacter sp. (strain 638).